A 223-amino-acid chain; its full sequence is MTMNIAKMIDHTLLKPEATEQQIVQLCTEAKQYGFASVCVNPTWVKTAARELSGTDVRVCTVIGFPLGATTPETKAFETTNAIENGAREVDMVINIGALKSGQDELVERDIRAVVEAAAGRALVKVIVETALLTDEEKVRACQLAVKAGADYVKTSTGFSGGGATVEDVALMRKTVGDRAGVKASGGVRDWKTAEAMINAGATRIGTSSGVAIVTGGTGRADY.

Residue Asp-91 is the Proton donor/acceptor of the active site. Lys-154 functions as the Schiff-base intermediate with acetaldehyde in the catalytic mechanism. Residue Lys-183 is the Proton donor/acceptor of the active site.

It belongs to the DeoC/FbaB aldolase family. DeoC type 1 subfamily.

It localises to the cytoplasm. It catalyses the reaction 2-deoxy-D-ribose 5-phosphate = D-glyceraldehyde 3-phosphate + acetaldehyde. It functions in the pathway carbohydrate degradation; 2-deoxy-D-ribose 1-phosphate degradation; D-glyceraldehyde 3-phosphate and acetaldehyde from 2-deoxy-alpha-D-ribose 1-phosphate: step 2/2. Its function is as follows. Catalyzes a reversible aldol reaction between acetaldehyde and D-glyceraldehyde 3-phosphate to generate 2-deoxy-D-ribose 5-phosphate. The polypeptide is Deoxyribose-phosphate aldolase (Geobacillus kaustophilus (strain HTA426)).